A 170-amino-acid chain; its full sequence is Arginine repressor (170 aa).

Belongs to the ArgR family.

The protein resides in the cytoplasm. It functions in the pathway amino-acid biosynthesis; L-arginine biosynthesis [regulation]. Its function is as follows. Regulates arginine biosynthesis genes. This chain is Arginine repressor, found in Mycobacterium tuberculosis (strain ATCC 25177 / H37Ra).